The following is a 235-amino-acid chain: Ribonuclease 3 (235 aa).

The 130-residue stretch at 6-135 (LISLEKILGF…VIGAVYFDCG (130 aa)) folds into the RNase III domain. Mg(2+) is bound at residue E48. The active site involves D52. Residues N121 and E124 each contribute to the Mg(2+) site. E124 is a catalytic residue. The region spanning 162-231 (DEKTTLQELL…AKKALELLKN (70 aa)) is the DRBM domain.

Belongs to the ribonuclease III family. As to quaternary structure, homodimer. The cofactor is Mg(2+).

The protein localises to the cytoplasm. The catalysed reaction is Endonucleolytic cleavage to 5'-phosphomonoester.. Functionally, digests double-stranded RNA. Involved in the processing of primary rRNA transcript to yield the immediate precursors to the large and small rRNAs (23S and 16S). Processes some mRNAs, and tRNAs when they are encoded in the rRNA operon. Processes pre-crRNA and tracrRNA of type II CRISPR loci if present in the organism. This chain is Ribonuclease 3, found in Carboxydothermus hydrogenoformans (strain ATCC BAA-161 / DSM 6008 / Z-2901).